A 359-amino-acid polypeptide reads, in one-letter code: MGCFHSTGSEAKKRSKLIDEQLRHDHERCVGEIKLLLLGAGESGKSTIVRQMRILHETGFNKQEQMAYRPVVFSNMVQSMLAILKAMQPLNISFTDAAREEDARMFISHFLHVNNAELSEAFSLELSDLMKQLWMDEGVKKCVKRAHEYQLNDSAEYYFNALDRISSSSYLPTQDDILRARVKSTGIVETTFMYKDLCFKMFDVGGQRSERKKWIHCFDSVTAVIFCVALSEYDLRLAEDQTMNRMHESMQLFDSIVNNCWFTETSIILFLNKMDIFEERIRYTPLTVCFPEYQGGMTITETSTFIQSRFEILNKRQTPAQKEIYSHFTCATDTNNIRFVFDAVTDIIIRNNLYLCGLY.

A lipid anchor (N-myristoyl glycine) is attached at Gly-2. Residue Cys-3 is the site of S-palmitoyl cysteine attachment. The region spanning 31–359 is the G-alpha domain; that stretch reads GEIKLLLLGA…RNNLYLCGLY (329 aa). The G1 motif stretch occupies residues 34–47; that stretch reads KLLLLGAGESGKST. GTP contacts are provided by residues 39 to 46, 178 to 184, 203 to 207, 272 to 275, and Ala-331; these read GAGESGKS, LRARVKS, DVGGQ, and NKMD. A Mg(2+)-binding site is contributed by Ser-46. Residues 176 to 184 form a G2 motif region; sequence DILRARVKS. The segment at 199–208 is G3 motif; the sequence is FKMFDVGGQR. Residues 268-275 are G4 motif; the sequence is ILFLNKMD. The segment at 329 to 334 is G5 motif; sequence TCATDT.

Belongs to the G-alpha family. G(i/o/t/z) subfamily. In terms of assembly, g proteins are composed of 3 units; alpha, beta and gamma. The alpha chain contains the guanine nucleotide binding site. As to expression, expressed in ASI neurons.

Its function is as follows. Guanine nucleotide-binding proteins (G proteins) are involved as modulators or transducers in various transmembrane signaling systems. Acts in concert with npr-15 to activate TGF-beta-like daf-7 secretion in the ASI neuron, thereby promoting larval development and inhibition of dauer diapause. The sequence is that of Guanine nucleotide-binding protein alpha-4 subunit (gpa-4) from Caenorhabditis elegans.